The chain runs to 184 residues: Elongation factor P (184 aa).

It belongs to the elongation factor P family.

The protein localises to the cytoplasm. The protein operates within protein biosynthesis; polypeptide chain elongation. Involved in peptide bond synthesis. Stimulates efficient translation and peptide-bond synthesis on native or reconstituted 70S ribosomes in vitro. Probably functions indirectly by altering the affinity of the ribosome for aminoacyl-tRNA, thus increasing their reactivity as acceptors for peptidyl transferase. In Delftia acidovorans (strain DSM 14801 / SPH-1), this protein is Elongation factor P.